Consider the following 509-residue polypeptide: MFS antiporter QDR1 (509 aa).

Residues 1–41 lie on the Cytoplasmic side of the membrane; the sequence is MPGNREEFDIEKVLKSKKLEAIETSTEKKAPYTVFESTDKL. A helical transmembrane segment spans residues 42–62; that stretch reads LLIIVLSLVGFWSAISSPIYF. The Extracellular segment spans residues 63–75; that stretch reads PALPTLTKYFNTT. The helical transmembrane segment at 76–96 threads the bilayer; that stretch reads PSVMNISVVAYLIFQGIAPTI. The Cytoplasmic segment spans residues 97–106; that stretch reads SSNLADTFGR. The chain crosses the membrane as a helical span at residues 107–129; that stretch reads RPVILGSIIVFCAVCIAISQTNV. At 130–132 the chain is on the extracellular side; the sequence is YWL. The chain crosses the membrane as a helical span at residues 133–155; that stretch reads LALLRCFQAAGIAPVFAISSGVA. At 156–169 the chain is on the cytoplasmic side; the sequence is GDICTPANRGGMVG. Residues 170–190 traverse the membrane as a helical segment; it reads AVSGLQLAGNGIGGLVGAALI. At 191–197 the chain is on the extracellular side; sequence SGFHTWR. The chain crosses the membrane as a helical span at residues 198 to 218; that stretch reads AIFIFLAIGGGVTFIFAFLVL. Topologically, residues 219–278 are cytoplasmic; that stretch reads AETSRRIVGNGSIRPKNVLNKAVLIYLPHFKNKITNDYSTLQPKGPFDILGPFKIFFQKE. The chain crosses the membrane as a helical span at residues 279 to 299; it reads VFCTLLPSGMHFAAWTVSLTS. Residues 300–312 are Extracellular-facing; that stretch reads LSTELESAKYNYS. A helical transmembrane segment spans residues 313 to 333; the sequence is VMKVGLVYLPQGIACFIGSLI. Residues 334-370 are Cytoplasmic-facing; sequence AGRCLNWYYRYRKNLYDKQMNDVPLNDRPPFNLVASR. Residues 371–391 form a helical membrane-spanning segment; that stretch reads LTLTIVPLAMMVIGLSAFGWC. Residues 392–397 are Extracellular-facing; sequence LEYKKP. A helical membrane pass occupies residues 398–418; sequence IISIIISTILISFSASVMMSI. Residues 419 to 432 lie on the Cytoplasmic side of the membrane; that stretch reads CTTMLVDLYPKQSG. A helical membrane pass occupies residues 433 to 453; sequence ASASCVNLMRCWLAALFTGVL. Residues 454–455 are Extracellular-facing; that stretch reads DK. A helical membrane pass occupies residues 456 to 476; the sequence is IISALGLGGTYTLLTGICLLT. Over 477 to 509 the chain is Cytoplasmic; it reads DLGLVYVLYTANQRFVNYVSPNQTAVNSDAEDY.

The protein belongs to the major facilitator superfamily. CAR1 family.

The protein resides in the cell membrane. MFS antiporter that does not display functional linkage as drug transporter and performs functions that significantly affect biofilm development and virulence. No substrate for transport has been identified yet, but plays an important role in the growth in the host. This Candida albicans (strain SC5314 / ATCC MYA-2876) (Yeast) protein is MFS antiporter QDR1 (QDR).